The sequence spans 458 residues: Cobyrinate a,c-diamide synthase (458 aa).

A GATase cobBQ-type domain is found at Lys-254–Ser-445. Cys-335 serves as the catalytic Nucleophile.

It belongs to the CobB/CbiA family. Mg(2+) serves as cofactor.

The catalysed reaction is cob(II)yrinate + 2 L-glutamine + 2 ATP + 2 H2O = cob(II)yrinate a,c diamide + 2 L-glutamate + 2 ADP + 2 phosphate + 2 H(+). It functions in the pathway cofactor biosynthesis; adenosylcobalamin biosynthesis; cob(II)yrinate a,c-diamide from sirohydrochlorin (anaerobic route): step 10/10. In terms of biological role, catalyzes the ATP-dependent amidation of the two carboxylate groups at positions a and c of cobyrinate, using either L-glutamine or ammonia as the nitrogen source. This Archaeoglobus fulgidus (strain ATCC 49558 / DSM 4304 / JCM 9628 / NBRC 100126 / VC-16) protein is Cobyrinate a,c-diamide synthase.